The primary structure comprises 111 residues: Class I hydrophobin 2 (111 aa).

The first 21 residues, 1–21 (MFSRVMFCTFLILPLLAAATA), serve as a signal peptide directing secretion. 4 disulfide bridges follow: Cys30/Cys90, Cys37/Cys84, Cys38/Cys71, and Cys91/Cys104.

Belongs to the fungal hydrophobin family. As to quaternary structure, self-assembles to form functional amyloid fibrils called rodlets. Self-assembly into fibrillar rodlets occurs spontaneously at hydrophobic:hydrophilic interfaces and the rodlets further associate laterally to form amphipathic monolayers. Behavior depends on environmental conditions: (1) when the pH increases or in the presence of Ca(2+) ions, an assembled state, beta-sheet rich, is formed; (2) when the solvent polarity increases, the vhm2 shows an increased tendency to reach hydrophobic/hydrophilic interfaces, with no detectable conformational change; and (3) at high temperature, a reversible conformational change and reversible aggregation occur. The physical and chemical properties, both in solution and as a biofilm, are affected by polysaccharides that act as hydrophilic stabilizer.

It is found in the secreted. Its subcellular location is the cell wall. Functionally, aerial growth, conidiation, and dispersal of filamentous fungi in the environment rely upon a capability of their secreting small amphipathic proteins called hydrophobins (HPBs) with low sequence identity. Class I can self-assemble into an outermost layer of rodlet bundles on aerial cell surfaces, conferring cellular hydrophobicity that supports fungal growth, development and dispersal; whereas Class II form highly ordered films at water-air interfaces through intermolecular interactions but contribute nothing to the rodlet structure. Vmh2 is a class I hydrophobin involved in biofilm formation and is essential for the maintenance of the surface hydrophobicity of the mycelium. Seems not to be involved in hyphal resistance against environmental stress. The chain is Class I hydrophobin 2 from Pleurotus ostreatus (strain PC15) (Oyster mushroom).